The following is a 672-amino-acid chain: Forkhead box protein O3 (672 aa).

2 disordered regions span residues 1-85 and 110-152; these read MAEA…GVSS and GPAS…CSSR. Ser-30 is modified (phosphoserine). Phosphothreonine is present on Thr-32. Lys-46 bears the N6-methyllysine mark. Over residues 57–68 the composition is skewed to acidic residues; that stretch reads IPEEDDDEDDED. Positions 80–108 are required for mitochondrial import; the sequence is GGGVSSTLGSGLLLEDSAMLLAPGGQDLG. Low complexity predominate over residues 110-129; sequence GPASAAGALSGGTPTQLQPQ. Lys-148 is subject to N6-methyllysine. Positions 156–250 form a DNA-binding region, fork-head; that stretch reads WGNLSYADLI…KSGKAPRRRA (95 aa). Residue Thr-178 is modified to Phosphothreonine. A phosphoserine mark is found at Ser-208 and Ser-214. Position 229 is an N6-methyllysine (Lys-229). Positions 230–301 are disordered; the sequence is SSWWIINPDG…GSPTSRSSDE (72 aa). Lys-241 carries the N6-acetyllysine modification. The short motif at 241 to 258 is the Nuclear localization signal element; sequence KSGKAPRRRAVSMDNSNK. The residue at position 252 (Ser-252) is a Phosphoserine. Over residues 260-271 the composition is skewed to basic residues; it reads TKSRGRAAKKKA. Residues Lys-261 and Lys-270 each carry the N6-methyllysine modification. A phosphoserine mark is found at Ser-279 and Ser-283. Over residues 282-297 the composition is skewed to polar residues; that stretch reads DSPSQLSKWPGSPTSR. Lys-289 carries the N6-methyllysine modification. At Ser-293 the chain carries Phosphoserine. Residue Ser-298 is modified to Phosphoserine; by CaMK2A. The mediates interaction with CHUK/IKKA and IKBKB/IKKB stretch occupies residues 299-672; sequence SDELDAWTDF…QASSQSWVPG (374 aa). Ser-310 is modified (phosphoserine). The residue at position 314 (Ser-314) is a Phosphoserine; by SGK1. Phosphoserine; by AMPK is present on residues Ser-398 and Ser-412. Disordered regions lie at residues 399–441 and 535–583; these read QPSP…SLNS and HQHQ…QTLS. Polar residues-rich tracts occupy residues 409–441 and 548–577; these read RGSS…SLNS and ALSN…PASQ. Position 418 is an N6-methyllysine (Lys-418). Ser-420 bears the Phosphoserine mark. Ser-550 is subject to Phosphoserine; by MAPKAPK5. At Ser-554 the chain carries Phosphoserine; by AMPK and MAPKAPK5. Phosphoserine; by AMPK is present on residues Ser-587 and Ser-625. Ser-643 carries the post-translational modification Phosphoserine; by IKKB.

Upon metabolic stress, forms a complex composed of FOXO3, SIRT3 and mitochondrial RNA polymerase POLRMT; the complex is recruited to mtDNA in a SIRT3-dependent manner. Also forms a complex composed of FOXO3, SIRT3, TFAM and POLRMT. Interacts with SIRT2; the interaction occurs independently of SIRT2 deacetylase activity. Interacts with YWHAB/14-3-3-beta and YWHAZ/14-3-3-zeta, which are required for cytosolic sequestration. Upon oxidative stress, interacts with STK4/MST1, which disrupts interaction with YWHAB/14-3-3-beta and leads to nuclear translocation. Interacts with PIM1. Interacts with DDIT3/CHOP. Interacts (deacetylated form) with SKP2. Interacts with CHUK and IKBKB. Interacts with CAMK2A, CAMK2B and calcineurin A. Interacts with NUPR1; this interaction represses FOXO3 transactivation. Deacetylation by SIRT1 or SIRT2 stimulates interaction of FOXO3 with SKP2 and facilitates SCF(SKP2)-mediated FOXO3 ubiquitination and proteasomal degradation. Deacetylation by SIRT2 stimulates FOXO3-mediated transcriptional activity in response to oxidative stress. Deacetylated by SIRT3. Deacetylation by SIRT3 stimulates FOXO3-mediated mtDNA transcriptional activity in response to metabolic stress. In terms of processing, in the presence of survival factors such as IGF1, phosphorylated on Thr-32 and Ser-252 by AKT1/PKB. This phosphorylated form then interacts with 14-3-3 proteins and is retained in the cytoplasm. Survival factor withdrawal induces dephosphorylation and promotes translocation to the nucleus where the dephosphorylated protein induces transcription of target genes and triggers apoptosis. Although AKT1/PKB doesn't appear to phosphorylate Ser-314 directly, it may activate other kinases that trigger phosphorylation at this residue. Phosphorylated by STK4/MST1 on Ser-208 upon oxidative stress, which leads to dissociation from YWHAB/14-3-3-beta and nuclear translocation. Phosphorylated by PIM1. Phosphorylation by AMPK leads to the activation of transcriptional activity without affecting subcellular localization. Phosphorylated by AMPK on Ser-30 in response to metabolic stress which mediates FOXO3 mitochondrial translocation. Phosphorylation by MAPKAPK5 promotes nuclear localization and DNA-binding, leading to induction of miR-34b and miR-34c expression, 2 post-transcriptional regulators of MYC that bind to the 3'UTR of MYC transcript and prevent its translation. Phosphorylated by CHUK/IKKA and IKBKB/IKKB. TNF-induced inactivation of FOXO3 requires its phosphorylation at Ser-643 by IKBKB/IKKB which promotes FOXO3 retention in the cytoplasm, polyubiquitination and ubiquitin-mediated proteasomal degradation. May be dephosphorylated by calcineurin A on Ser-298 which abolishes FOXO3 transcriptional activity. Phosphorylation at Ser-252 promotes its degradation by the proteasome. Dephosphorylation at Ser-252 by protein phosphatase 2A (PPP2CA) promotes its stabilization; interaction with PPP2CA is enhanced by AMBRA1. Post-translationally, heavily methylated by SET9 which decreases stability, while moderately increasing transcriptional activity. The main methylation site is Lys-270. Methylation doesn't affect subcellular location. Polyubiquitinated. Ubiquitinated by a SCF complex containing SKP2, leading to proteasomal degradation. In terms of processing, the N-terminus is cleaved following import into the mitochondrion. In terms of tissue distribution, expressed in white and brown adipose tissues (at protein level). Expressed in liver, kidney, lung and colon (at protein level). Expressed in skeletal muscles (at protein level).

The protein resides in the cytoplasm. Its subcellular location is the cytosol. The protein localises to the nucleus. It localises to the mitochondrion matrix. It is found in the mitochondrion outer membrane. Transcriptional activator that recognizes and binds to the DNA sequence 5'-[AG]TAAA[TC]A-3' and regulates different processes, such as apoptosis and autophagy. Acts as a positive regulator of autophagy in skeletal muscle: in starved cells, enters the nucleus following dephosphorylation and binds the promoters of autophagy genes, such as GABARAP1L, MAP1LC3B and ATG12, thereby activating their expression, resulting in proteolysis of skeletal muscle proteins. Triggers apoptosis in the absence of survival factors, including neuronal cell death upon oxidative stress. Participates in post-transcriptional regulation of MYC: following phosphorylation by MAPKAPK5, promotes induction of miR-34b and miR-34c expression, 2 post-transcriptional regulators of MYC that bind to the 3'UTR of MYC transcript and prevent its translation. In response to metabolic stress, translocates into the mitochondria where it promotes mtDNA transcription. Also acts as a key regulator of chondrogenic commitment of skeletal progenitor cells in response to lipid availability: when lipids levels are low, translocates to the nucleus and promotes expression of SOX9, which induces chondrogenic commitment and suppresses fatty acid oxidation. Also acts as a key regulator of regulatory T-cells (Treg) differentiation by activating expression of FOXP3. This Mus musculus (Mouse) protein is Forkhead box protein O3.